A 100-amino-acid chain; its full sequence is C-X-C motif chemokine 2 (100 aa).

The signal sequence occupies residues 1 to 31 (MAPPTRQLLNAVLVLLLLLATNHQGTGVVVA). 2 disulfide bridges follow: Cys36-Cys62 and Cys38-Cys78.

It belongs to the intercrine alpha (chemokine CxC) family. As to quaternary structure, homotetramer. As to expression, at least expressed in the lung and trachea.

It localises to the secreted. In terms of biological role, chemotactic for human polymorphonuclear leukocytes but does not induce chemokinesis or an oxidative burst. Contributes to neutrophil activation during inflammation. This is C-X-C motif chemokine 2 (Cxcl2) from Rattus norvegicus (Rat).